A 294-amino-acid polypeptide reads, in one-letter code: Small ribosomal subunit biogenesis GTPase RsgA (294 aa).

The region spanning 63-223 (KNELLRPPIA…VADTPGFSSL (161 aa)) is the CP-type G domain. Residues 112-115 (SKID) and 166-174 (GQSGVGKSS) contribute to the GTP site. 4 residues coordinate Zn(2+): C247, C252, H254, and C260.

Belongs to the TRAFAC class YlqF/YawG GTPase family. RsgA subfamily. As to quaternary structure, monomer. Associates with 30S ribosomal subunit, binds 16S rRNA. Zn(2+) is required as a cofactor.

It is found in the cytoplasm. One of several proteins that assist in the late maturation steps of the functional core of the 30S ribosomal subunit. Helps release RbfA from mature subunits. May play a role in the assembly of ribosomal proteins into the subunit. Circularly permuted GTPase that catalyzes slow GTP hydrolysis, GTPase activity is stimulated by the 30S ribosomal subunit. In Halalkalibacterium halodurans (strain ATCC BAA-125 / DSM 18197 / FERM 7344 / JCM 9153 / C-125) (Bacillus halodurans), this protein is Small ribosomal subunit biogenesis GTPase RsgA.